Consider the following 304-residue polypeptide: UPF0282 protein TSIB_1029 (304 aa).

It belongs to the UPF0282 family.

This is UPF0282 protein TSIB_1029 from Thermococcus sibiricus (strain DSM 12597 / MM 739).